The primary structure comprises 261 residues: tRNA pseudouridine synthase A (261 aa).

Residue Asp-53 is the Nucleophile of the active site. Residue Tyr-111 coordinates substrate.

It belongs to the tRNA pseudouridine synthase TruA family. In terms of assembly, homodimer.

It carries out the reaction uridine(38/39/40) in tRNA = pseudouridine(38/39/40) in tRNA. In terms of biological role, formation of pseudouridine at positions 38, 39 and 40 in the anticodon stem and loop of transfer RNAs. The chain is tRNA pseudouridine synthase A from Shouchella clausii (strain KSM-K16) (Alkalihalobacillus clausii).